We begin with the raw amino-acid sequence, 552 residues long: Protein TRM32 (552 aa).

Residues 295–379 (TDLPRDSSTS…NKTAEKTETL (85 aa)) are disordered. Residues 331-351 (VRAEKEEKYEVQEERSQENHL) show a composition bias toward basic and acidic residues. Positions 352-371 (DSSNQRILQQEPDSVPSTNK) are enriched in polar residues.

The sequence is that of Protein TRM32 (TRM32) from Arabidopsis thaliana (Mouse-ear cress).